The chain runs to 592 residues: Transmembrane 9 superfamily member 2 (592 aa).

Residues 1 to 24 (MRTPTTILLLVGAILFSGAGYVRS) form the signal peptide. The Lumenal segment spans residues 25–229 (DASDHRYKEG…SLPHHLEIHW (205 aa)). Residues 230 to 250 (FSIINSCVTVLLLTGFLATIL) form a helical membrane-spanning segment. The Cytoplasmic segment spans residues 251–302 (MRVLKNDFMKYAQDEEAADDQEETGWKYIHGDVFRFPTHNSLFAASLGSGTQ). A helical membrane pass occupies residues 303–323 (LFTLTIFIFMLALVGVFYPYN). Arg324 is a topological domain (lumenal). The helical transmembrane segment at 325–345 (GALFTALVVIYALTSGIAGYT) threads the bilayer. Residues 346–362 (SASFYCQLEGKSWVRNL) are Cytoplasmic-facing. The helical transmembrane segment at 363 to 383 (LLTGCLFCGPLFLTFCFLNTV) threads the bilayer. Residues 384-397 (AITYTATAALPFGT) lie on the Lumenal side of the membrane. The helical transmembrane segment at 398–418 (IVVIVLIWTLVTSPLLVLGGI) threads the bilayer. Over 419–452 (AGKNSKAEFQAPCRTTKYPREIPPLPWYRSAIPQ) the chain is Cytoplasmic. Residues 453-473 (MAMAGFLPFSAIYIELYYIFA) form a helical membrane-spanning segment. The Lumenal segment spans residues 474 to 485 (SVWGHRIYTIYS). A helical membrane pass occupies residues 486–506 (ILFIVFIILIIVTAFITVALT). The Cytoplasmic segment spans residues 507-521 (YFQLAAEDHQWWWRS). Residues 522–542 (FLCGGSTGLFIYAYCLYYYYA) form a helical membrane-spanning segment. At 543-553 (RSDMSGFMQTS) the chain is on the lumenal side. Residues 554–574 (FFFGYMACICYGFFLMLGTVG) form a helical membrane-spanning segment. The Cytoplasmic segment spans residues 575-592 (FRAALLFVRHIYRSIKCE). Residues 581–586 (FVRHIY) carry the Endoplasmic reticulum export signal motif. A Golgi retention signal motif is present at residues 590–592 (KCE).

This sequence belongs to the nonaspanin (TM9SF) (TC 9.A.2) family.

Its subcellular location is the endosome membrane. The protein resides in the golgi apparatus membrane. In Arabidopsis thaliana (Mouse-ear cress), this protein is Transmembrane 9 superfamily member 2.